The following is a 310-amino-acid chain: Protein-L-isoaspartate O-methyltransferase (310 aa).

Disordered stretches follow at residues 1 to 46 (MSGE…DKPA) and 60 to 79 (ALPG…TVLK). The segment covering 14-34 (EDLKRAPRKSEVRSGSGERHA) has biased composition (basic and acidic residues). Residues 35–46 (ASAVPKAADKPA) show a composition bias toward low complexity. S157 is a catalytic residue.

Belongs to the methyltransferase superfamily. L-isoaspartyl/D-aspartyl protein methyltransferase family.

Its subcellular location is the cytoplasm. The catalysed reaction is [protein]-L-isoaspartate + S-adenosyl-L-methionine = [protein]-L-isoaspartate alpha-methyl ester + S-adenosyl-L-homocysteine. In terms of biological role, catalyzes the methyl esterification of L-isoaspartyl residues in peptides and proteins that result from spontaneous decomposition of normal L-aspartyl and L-asparaginyl residues. It plays a role in the repair and/or degradation of damaged proteins. The polypeptide is Protein-L-isoaspartate O-methyltransferase (Burkholderia ambifaria (strain ATCC BAA-244 / DSM 16087 / CCUG 44356 / LMG 19182 / AMMD) (Burkholderia cepacia (strain AMMD))).